Reading from the N-terminus, the 604-residue chain is Protein CBFA2T2 (604 aa).

Residues 25 to 105 (KRVPAMPGSP…SSTSSALTNQ (81 aa)) are disordered. The residue at position 33 (serine 33) is a Phosphoserine. Lysine 38 participates in a covalent cross-link: Glycyl lysine isopeptide (Lys-Gly) (interchain with G-Cter in SUMO2). A compositionally biased stretch (pro residues) spans 46–59 (PTMPPLPPINPGGP). 2 stretches are compositionally biased toward polar residues: residues 64 to 79 (FTPT…SPPT) and 88 to 105 (QRFS…LTNQ). An interaction with PRDM14 region spans residues 107–215 (LPATCGARQL…QHEHLLLNTS (109 aa)). Residues 113–208 (ARQLSKLKRF…TPSQYLAQHE (96 aa)) form the TAFH domain. The disordered stretch occupies residues 229–265 (VHGNGKRPSPERREENSFDRDTIAPEPPAKRVCTISP). The span at 236–251 (PSPERREENSFDRDTI) shows a compositional bias: basic and acidic residues. Serine 264 is modified (phosphoserine). The segment at 331–377 (QDELVDHRLTEREWADEWKHLDHALNCIMEMVEKTRRSMAVLRRCQE) is nervy homology region 2 (NHR2). Positions 397 to 427 (RKTGTELVSRQHSPGSADSLSNDSQREFNSR) are disordered. Residues 402–419 (ELVSRQHSPGSADSLSND) are compositionally biased toward polar residues. Serine 409 carries the post-translational modification Phosphoserine. Residues 435–484 (VEFWKKTEEAVNKVKIQAMSEVQKAVAEAEQKAFEVIATERARMEQTIAD) form a nervy homology region 3 (NHR3) region. Residue lysine 449 forms a Glycyl lysine isopeptide (Lys-Gly) (interchain with G-Cter in SUMO2) linkage. Positions 451 to 491 (QAMSEVQKAVAEAEQKAFEVIATERARMEQTIADVKRQAAE) form a coiled coil. Positions 507, 510, 518, 521, 527, 531, 539, and 543 each coordinate Zn(2+). The MYND-type zinc finger occupies 507 to 543 (CWNCGRKASETCSGCNIARYCGSFCQHKDWERHHRLC). The tract at residues 547 to 604 (LHGQSPHGQGRPLLPVGRGSSARSADCSVPSPALDKTSATTSRSSTPASVTAIDTNGL) is disordered. Serine 577 is modified (phosphoserine). Low complexity predominate over residues 583–598 (TSATTSRSSTPASVTA).

Belongs to the CBFA2T family. In terms of assembly, homooligomer. Homotetramerization is mediated by nervy homology region 2. Can interact with RUNX1T1/CBFA2T1 and CBFA2T3/MTG16; heterotetramerization between members of the CBFA2T family is proposed. Forms a heterooligomer with the AML1-MTG8/ETO fusion protein. Interacts with PRDM14. Interacts with RBPJ, GFI1, TCF4. Interacts with TAL1 and CBFA2T3/MTG16; the heteromer with CBFA2T3/MTG16 may function in repression of TAL1. Ubiquitously expressed in fetal and adult tissues. Highly expressed in adult brain, heart, lung, kidney, lymph node, appendix, thymus, testis, uterus, small intestine, prostate and thymus.

Its subcellular location is the nucleus. Functionally, transcriptional corepressor which facilitates transcriptional repression via its association with DNA-binding transcription factors and recruitment of other corepressors and histone-modifying enzymes. Via association with PRDM14 is involved in regulation of embryonic stem cell (ESC) pluripotency. Involved in primordial germ cell (PCG) formation. Stabilizes PRDM14 and OCT4 on chromatin in a homooligomerization-dependent manner. Can repress the expression of MMP7 in a ZBTB33-dependent manner. May function as a complex with the chimeric protein RUNX1/AML1-CBFA2T1/MTG8 (AML1-MTG8/ETO fusion protein) which is produced in acute myeloid leukemia with the chromosomal translocation t(8;21). May thus be involved in the repression of AML1-dependent transcription and the induction of G-CSF/CSF3-dependent cell growth. May be a tumor suppressor gene candidate involved in myeloid tumors with the deletion of the 20q11 region. Through heteromerization with CBFA2T3/MTG16 may be involved in regulation of the proliferation and the differentiation of erythroid progenitors by repressing the expression of TAL1 target genes. Required for the maintenance of the secretory cell lineage in the small intestine. Can inhibit Notch signaling probably by association with RBPJ and may be involved in GFI1-mediated Paneth cell differentiation. The sequence is that of Protein CBFA2T2 (CBFA2T2) from Homo sapiens (Human).